The chain runs to 1141 residues: cGMP-inhibited 3',5'-cyclic phosphodiesterase 3A (1141 aa).

The segment at 1 to 42 (MAVRGEAAQDLAKPGLGGASPARVARGNHRHRGESSPSPRGS) is disordered. Residues 62-82 (SALCAGSLSVLLALLVRLVGG) traverse the membrane as a helical segment. Residues 90–111 (KSQEAAAEEEEEEGARGGVFPG) form a disordered region. Transmembrane regions (helical) follow at residues 127-147 (LQPA…GLCL), 157-177 (AVAL…SLGV), 182-202 (LLSL…TWLV), 207-227 (LGVL…VSLE), and 229-249 (FKVA…LLLA). Residue S310 is modified to Phosphoserine. The span at 433–445 (RVSSTWTTTTSAT) shows a compositional bias: low complexity. Residues 433–483 (RVSSTWTTTTSATGLPTLEPAPVRRDRSASIKPHEAPSPSAVNPDSWNAPG) are disordered. The segment covering 454 to 467 (PVRRDRSASIKPHE) has biased composition (basic and acidic residues). The span at 472 to 483 (SAVNPDSWNAPG) shows a compositional bias: polar residues. Residues S492, S520, S524, and S533 each carry the phosphoserine modification. The disordered stretch occupies residues 505–654 (VKAKKQNRPG…CQREPQRKAS (150 aa)). Over residues 522–532 (VPSPSSSPPQG) the composition is skewed to pro residues. Residues 533–544 (SPASSPVSNSAS) are compositionally biased toward low complexity. The segment covering 618–637 (TSQVTSDYETNNNSDSSDIL) has biased composition (polar residues). Residues 669-1141 (KPILAPEPLV…EETLAPQPDL (473 aa)) form an interaction with SLFN12 region. In terms of domain architecture, PDEase spans 674 to 1093 (PEPLVMDNLD…MMWKKVIEEE (420 aa)). The active-site Proton donor is H752. H752 is a binding site for AMP. Mn(2+)-binding residues include H756, H836, D837, and D950. D837, D950, and Q1001 together coordinate AMP. A Mg(2+)-binding site is contributed by D837. 2 disordered regions span residues 1024–1060 (GKWV…SSIA) and 1120–1141 (KEEE…QPDL). The segment covering 1029 to 1046 (DSDDSGDTDDPEEEEEEA) has biased composition (acidic residues). S1033 carries the phosphoserine modification. At T1036 the chain carries Phosphothreonine. K1120 is covalently cross-linked (Glycyl lysine isopeptide (Lys-Gly) (interchain with G-Cter in SUMO2)).

Belongs to the cyclic nucleotide phosphodiesterase family. PDE3 subfamily. The cofactor is Mn(2+). Requires Mg(2+) as cofactor.

The protein resides in the membrane. The protein localises to the cytoplasm. It is found in the cytosol. It carries out the reaction a nucleoside 3',5'-cyclic phosphate + H2O = a nucleoside 5'-phosphate + H(+). It catalyses the reaction 3',5'-cyclic AMP + H2O = AMP + H(+). The enzyme catalyses 3',5'-cyclic GMP + H2O = GMP + H(+). The catalysed reaction is 3',5'-cyclic UMP + H2O = UMP + H(+). Its activity is regulated as follows. Inhibited by cGMP. Its function is as follows. Cyclic nucleotide phosphodiesterase with specificity for the second messengers cAMP and cGMP, which are key regulators of many important physiological processes. Also has activity toward cUMP. Independently of its catalytic activity it is part of an E2/17beta-estradiol-induced pro-apoptotic signaling pathway. E2 stabilizes the PDE3A/SLFN12 complex in the cytosol, promoting the dephosphorylation of SLFN12 and activating its pro-apoptotic ribosomal RNA/rRNA ribonuclease activity. This apoptotic pathway might be relevant in tissues with high concentration of E2 and be for instance involved in placenta remodeling. In Mus musculus (Mouse), this protein is cGMP-inhibited 3',5'-cyclic phosphodiesterase 3A.